The sequence spans 220 residues: Peptidyl-tRNA hydrolase (220 aa).

Y14 contributes to the tRNA binding site. H19 acts as the Proton acceptor in catalysis. Residues F60, N62, and N106 each contribute to the tRNA site.

Belongs to the PTH family. In terms of assembly, monomer.

It is found in the cytoplasm. It catalyses the reaction an N-acyl-L-alpha-aminoacyl-tRNA + H2O = an N-acyl-L-amino acid + a tRNA + H(+). Functionally, hydrolyzes ribosome-free peptidyl-tRNAs (with 1 or more amino acids incorporated), which drop off the ribosome during protein synthesis, or as a result of ribosome stalling. In terms of biological role, catalyzes the release of premature peptidyl moieties from peptidyl-tRNA molecules trapped in stalled 50S ribosomal subunits, and thus maintains levels of free tRNAs and 50S ribosomes. The sequence is that of Peptidyl-tRNA hydrolase from Campylobacter hominis (strain ATCC BAA-381 / DSM 21671 / CCUG 45161 / LMG 19568 / NCTC 13146 / CH001A).